Reading from the N-terminus, the 429-residue chain is Probable M18 family aminopeptidase 2 (429 aa).

Positions 82, 156, and 401 each coordinate Zn(2+).

Belongs to the peptidase M18 family. Zn(2+) serves as cofactor.

The protein is Probable M18 family aminopeptidase 2 of Pseudomonas aeruginosa (strain UCBPP-PA14).